A 483-amino-acid chain; its full sequence is Shaker-related potassium channel tsha2 (483 aa).

Residues 1-165 lie on the Cytoplasmic side of the membrane; that stretch reads MTVVSCEIQD…YPESSGPARM (165 aa). Residues 166–186 form a helical membrane-spanning segment; the sequence is IAVVSVSVIVISIVIFCLETL. Topologically, residues 187–220 are extracellular; it reads PQFREDTSANLPLSNHHTTNGTTLHKKPNLFTDP. Residues 221 to 241 form a helical membrane-spanning segment; it reads FFMVETLCIVWFSFEFLVRFL. Topologically, residues 242–252 are cytoplasmic; the sequence is SCPSKPAFFKN. Cys243 is lipidated: S-palmitoyl cysteine. The helical transmembrane segment at 253-273 threads the bilayer; that stretch reads AMNSIDILAIAPYFITLGLEL. At 274-324 the chain is on the extracellular side; the sequence is AEQQEAGSEQAMSLAILRVIRLVRVFRIFKLSRHSKGLQILGQTLHASISE. A helical; Voltage-sensor membrane pass occupies residues 325-345; sequence LGLLIFFLLIGVILFSSAVYF. Residues 346–353 are Cytoplasmic-facing; sequence AEADDPES. Residues 354–374 traverse the membrane as a helical segment; that stretch reads GFSSIPAAFWWAVVSMTTVGY. The Selectivity filter motif lies at 371–376; that stretch reads TVGYGD. The Extracellular portion of the chain corresponds to 375 to 385; it reads GDMCPVTIGGK. A helical transmembrane segment spans residues 386-406; it reads IVGSMCAIAGVLTIALPVPVI. Residues 407–483 are Cytoplasmic-facing; sequence VSNFNYFYHR…EHYTGKLTDV (77 aa). Tyr426 bears the Phosphotyrosine mark. Thr430 bears the Phosphothreonine mark. The segment covering 440–452 has biased composition (polar residues); sequence EFKSTSDSRQSLT. The segment at 440–459 is disordered; that stretch reads EFKSTSDSRQSLTKSEDTEE. A PDZ-binding motif is present at residues 481 to 483; it reads TDV.

It belongs to the potassium channel family. A (Shaker) (TC 1.A.1.2) subfamily. As to quaternary structure, heterotetramer of potassium channel proteins. Binds PDZ domains of dlg1, dlg2 and dlg4. Expressed in oligodendrocytes and astrocytes.

It is found in the membrane. Functionally, mediates the voltage-dependent potassium ion permeability of excitable membranes. Assuming opened or closed conformations in response to the voltage difference across the membrane, the protein forms a potassium-selective channel through which potassium ions may pass in accordance with their electrochemical gradient. This is Shaker-related potassium channel tsha2 from Oncorhynchus mykiss (Rainbow trout).